We begin with the raw amino-acid sequence, 2851 residues long: Highly reducing polyketide synthase sthA (2851 aa).

One can recognise a Ketosynthase family 3 (KS3) domain in the interval 8–415; the sequence is NEPIVIIGSG…GTNAHAIVEG (408 aa). Positions 304 to 324 are disordered; sequence LDPESPNDRPQYIESHGTGTP. The tract at residues 529–851 is acyl transferase (AT) domain; that stretch reads IFTGQGAQYA…PYHGSLVRGE (323 aa). The N-terminal hotdog fold stretch occupies residues 926 to 1059; sequence HQLLGNVSPD…GELNILLVDD (134 aa). Residues 926 to 1235 enclose the PKS/mFAS DH domain; the sequence is HQLLGNVSPD…FKPVGSDAKD (310 aa). The dehydratase (DH) domain stretch occupies residues 949–1242; the sequence is PKEMTWLEGH…AKDDRNVFYK (294 aa). Residue H958 is the Proton acceptor; for dehydratase activity of the active site. Positions 1076–1235 are C-terminal hotdog fold; sequence MIPVQPSRLY…FKPVGSDAKD (160 aa). D1137 acts as the Proton donor; for dehydratase activity in catalysis. The segment at 1390 to 1577 is methyltransferase (MT) domain; the sequence is QCTLWVAGVL…GIDTMSPPEL (188 aa). The segment at 2079–2252 is ketoreductase (KR)domain; sequence TYWLVGLSGA…RSSVVNVGAI (174 aa). The 84-residue stretch at 2360 to 2443 folds into the Carrier domain; it reads ADITKVVQQA…DLAAESIPAE (84 aa). S2399 is subject to O-(pantetheine 4'-phosphoryl)serine. Residues 2447 to 2496 are disordered; sequence HVQQQQQQAGRQDASSNTSSDDETASTLPTSPESASPGTSTPVPEKDISP. The span at 2455 to 2488 shows a compositional bias: polar residues; that stretch reads AGRQDASSNTSSDDETASTLPTSPESASPGTSTP. The segment at 2535-2767 is reductase (R) domain; the sequence is LTGCSGLLGH…DLVSVDTCCS (233 aa).

It depends on pantetheine 4'-phosphate as a cofactor.

The enzyme catalyses 7 malonyl-CoA + acetyl-CoA + 10 AH2 + 5 S-adenosyl-L-methionine + 2 H(+) = dehydroprobetaenone I + 10 A + 5 S-adenosyl-L-homocysteine + 7 CO2 + 8 CoA + 6 H2O. It participates in mycotoxin biosynthesis. Highly reducing polyketide synthase; part of the gene cluster that mediates the biosynthesis of the phytotoxin stemphyloxin II. The first step of the pathway is the synthesis of dehydroprobetaenone I by the polyketide synthase sthA and the enoyl reductase sthE via condensation of one acetyl-CoA starter unit with 7 malonyl-CoA units and 5 methylations. The C-terminal reductase (R) domain of sthA catalyzes the reductive release of the polyketide chain. Because sthA lacks a designated enoylreductase (ER) domain, the required activity is provided the enoyl reductase sthE. The short-chain dehydrogenase/reductase sthC then catalyzes reduction of dehydroprobetaenone I to probetaenone I. The cytochrome P450 monooxygenase sthF catalyzes successive epoxidation, oxidation (resulting from epoxide opening) and hydroxylation to install a tertiary alcohol in the decaline ring to yield betaenone C from dehydroprobetaenone I and betaenone B from probetaenone I. The FAD-linked oxidoreductase sthB is responsible for the conversion of betaenone C to betaenone A via an intramolecular aldol reaction between C-1 and C-17 to form the bridged tricyclic system in betaenone A. Finally, the cytochrome P450 monooxygenase sthD catalyzes the hydroxylation of C-15 to afford the final metabolite stemphyloxin II. The protein is Highly reducing polyketide synthase sthA of Phaeosphaeria nodorum (strain SN15 / ATCC MYA-4574 / FGSC 10173) (Glume blotch fungus).